The primary structure comprises 491 residues: Glutamyl-tRNA(Gln) amidotransferase subunit A (491 aa).

Catalysis depends on charge relay system residues Lys-79 and Ser-154. The active-site Acyl-ester intermediate is the Ser-178.

This sequence belongs to the amidase family. GatA subfamily. Heterotrimer of A, B and C subunits.

The enzyme catalyses L-glutamyl-tRNA(Gln) + L-glutamine + ATP + H2O = L-glutaminyl-tRNA(Gln) + L-glutamate + ADP + phosphate + H(+). Its function is as follows. Allows the formation of correctly charged Gln-tRNA(Gln) through the transamidation of misacylated Glu-tRNA(Gln) in organisms which lack glutaminyl-tRNA synthetase. The reaction takes place in the presence of glutamine and ATP through an activated gamma-phospho-Glu-tRNA(Gln). This Alkaliphilus metalliredigens (strain QYMF) protein is Glutamyl-tRNA(Gln) amidotransferase subunit A.